A 610-amino-acid polypeptide reads, in one-letter code: UvrABC system protein C (610 aa).

The GIY-YIG domain maps to 16–94; the sequence is SQPGVYRMYD…IKLYQPRYNV (79 aa). The region spanning 204–239 is the UVR domain; that stretch reads DQVLTQLISRMETASQNLEFEEAARIRDQIQAVRRV.

It belongs to the UvrC family. As to quaternary structure, interacts with UvrB in an incision complex.

It localises to the cytoplasm. The UvrABC repair system catalyzes the recognition and processing of DNA lesions. UvrC both incises the 5' and 3' sides of the lesion. The N-terminal half is responsible for the 3' incision and the C-terminal half is responsible for the 5' incision. The polypeptide is UvrABC system protein C (Escherichia coli O1:K1 / APEC).